Consider the following 669-residue polypeptide: Galactocerebrosidase (669 aa).

Residues 1–26 (MTAAAGSAGHAAVPLLLCALLVPGGA) form the signal peptide. 3 residues coordinate substrate: threonine 93, tryptophan 135, and asparagine 181. Residue glutamate 182 is the Proton donor/acceptor of the active site. Glutamate 258 serves as the catalytic Nucleophile. Cysteine 271 and cysteine 378 are disulfide-bonded. Asparagine 363 carries an N-linked (GlcNAc...) asparagine glycan. Position 380 (arginine 380) interacts with substrate. 3 N-linked (GlcNAc...) asparagine glycosylation sites follow: asparagine 387, asparagine 543, and asparagine 586.

This sequence belongs to the glycosyl hydrolase 59 family.

The protein resides in the lysosome. The enzyme catalyses a beta-D-galactosyl-(1&lt;-&gt;1')-N-acylsphing-4-enine + H2O = an N-acylsphing-4-enine + D-galactose. It catalyses the reaction beta-D-galactosyl-(1&lt;-&gt;1)-sphing-4-enine + H2O = sphing-4-enine + D-galactose. It carries out the reaction a D-galactosylceramide + H2O = an N-acyl-sphingoid base + D-galactose. Its function is as follows. Hydrolyzes the galactose ester bonds of glycolipids such as galactosylceramide and galactosylsphingosine. Enzyme with very low activity responsible for the lysosomal catabolism of galactosylceramide, a major lipid in myelin, kidney and epithelial cells of small intestine and colon. The protein is Galactocerebrosidase of Canis lupus familiaris (Dog).